Reading from the N-terminus, the 165-residue chain is HTH-type transcriptional regulator IscR (165 aa).

The 130-residue stretch at 2–131 (RLTSKGRYAV…NNITLAELVS (130 aa)) folds into the HTH rrf2-type domain. Positions 28 to 51 (LAEISERQGISLSYLEQLFSRLRK) form a DNA-binding region, H-T-H motif. [2Fe-2S] cluster is bound by residues C92, C98, and C104. The disordered stretch occupies residues 144–165 (NDTRRPLTNGRPQETINVNLHA). Residues 153–165 (GRPQETINVNLHA) show a composition bias toward polar residues.

[2Fe-2S] cluster serves as cofactor.

Functionally, regulates the transcription of several operons and genes involved in the biogenesis of Fe-S clusters and Fe-S-containing proteins. In Sodalis glossinidius (strain morsitans), this protein is HTH-type transcriptional regulator IscR.